Consider the following 372-residue polypeptide: UDP-N-acetylglucosamine 2-epimerase (372 aa).

Substrate-binding positions include R10, K15, D95, E117, H212, Q270, F275, S289–G291, E295, and R312.

Belongs to the UDP-N-acetylglucosamine 2-epimerase family.

The enzyme catalyses UDP-N-acetyl-alpha-D-glucosamine = UDP-N-acetyl-alpha-D-mannosamine. Its pathway is capsule biogenesis; capsule polysaccharide biosynthesis. With respect to regulation, activated by UDP-GlcNAc and inhibited by 2-acetamidoglucal and UDP. Activity is strongly decreased in the presence of Co(2+) and abolished in the presence of Mn(2+) or Zn(2+). Its function is as follows. Catalyzes the interconversion between UDP-N-acetylglucosamine (UDP-GlcNAc) and UDP-N-acetylmannosamine (UDP-ManNAc). Involved in the biosynthesis of the capsular polysaccharides. In vitro, can also use several chemoenzymatically synthesized UDP-ManNAc derivatives as substrates, with lower efficiency. The chain is UDP-N-acetylglucosamine 2-epimerase from Neisseria meningitidis serogroup A / serotype 4A (strain DSM 15465 / Z2491).